The chain runs to 88 residues: MLKLRLKRCGRKQRAVFRIVAIDVRSRREGKDLQKVGFYDPIKNQTYLNVTAILYFLEQGAQPTGTVQDIFKKAGVFKELRPNQMKFN.

It belongs to the bacterial ribosomal protein bS16 family.

The protein resides in the plastid. It localises to the chloroplast. In Coffea arabica (Arabian coffee), this protein is Small ribosomal subunit protein bS16c.